Consider the following 523-residue polypeptide: Cytochrome P450 monooxygenase bsc5 (523 aa).

A helical transmembrane segment spans residues 16 to 36; the sequence is MQLHWTVLGLLPVLFIAILGP. N-linked (GlcNAc...) asparagine glycans are attached at residues Asn-178, Asn-281, and Asn-403. Cys-459 contributes to the heme binding site.

It belongs to the cytochrome P450 family. The cofactor is heme.

It localises to the membrane. It functions in the pathway mycotoxin biosynthesis. Cytochrome P450 monooxygenase; part of the gene cluster that mediates the biosynthesis of the diterpene glucoside brassicicene C. In the first step of the brassicicene C biosynthesis, the bifunctional diterpene synthase bsc8 that possesses both prenyl transferase and terpene cyclase activity, converts isopentenyl diphosphate and dimethylallyl diphosphate into geranylgeranyl diphosphate (GGDP) that is further converted into fusicocca-2,10(14)-diene, the first precursor for brassicicene C. Fusicocca-2,10(14)-diene is then substrate of cytochrome P450 monooxygenase bsc1 for hydroxylation at the C-8 position. Oxidation at C-16 position to aldehyde is then catalyzed by the cytochrome P450 monooyxygenase bsc7, yielding fusicocca-2,10(14)-diene-8-beta,16-diol. Follows the isomerization of the double bond and reduction of aldehyde to alcohol catalyzed by the short-chain dehydrogenase/reductase bsc3 to yield the diol compound fusicocca-1,10(14)-diene-8 beta,16-diol. The next step is the oxidation at the C-3 position of fusicocca-2,10(14)-diene-8-beta,16-diol catalyzed by the alpha-ketoglutarate dependent dioxygenase bsc9, to produce a triol compound. Methylation of the hydroxy group at position 16 is performed by the methyltransferase bsc6. 16-O-methylation is followed by oxidation at the C-13 position to ketone and an alkyl shift of the methyl group leads to brassicicene C. Although the probable acetyltransferase bsc4 is included in the gene cluster, no acetylation reactions are necessary for brassicicene C biosynthesis. However, the fact that brassicicene E, which is a structurally related compound having an acetoxy group at position 12, was previously isolated from another strain of A.brassicicola suggests that the ATCC 96836 strain might also produce a small amount of brassicicene E. This Alternaria brassicicola (Dark leaf spot agent) protein is Cytochrome P450 monooxygenase bsc5.